A 103-amino-acid polypeptide reads, in one-letter code: Small ribosomal subunit protein uS10 (103 aa).

The protein belongs to the universal ribosomal protein uS10 family. In terms of assembly, part of the 30S ribosomal subunit.

In terms of biological role, involved in the binding of tRNA to the ribosomes. This chain is Small ribosomal subunit protein uS10, found in Acinetobacter baumannii (strain AB307-0294).